Consider the following 595-residue polypeptide: 2-succinyl-5-enolpyruvyl-6-hydroxy-3-cyclohexene-1-carboxylate synthase (595 aa).

It belongs to the TPP enzyme family. MenD subfamily. In terms of assembly, homodimer. Mg(2+) is required as a cofactor. Mn(2+) serves as cofactor. The cofactor is thiamine diphosphate.

The enzyme catalyses isochorismate + 2-oxoglutarate + H(+) = 5-enolpyruvoyl-6-hydroxy-2-succinyl-cyclohex-3-ene-1-carboxylate + CO2. The protein operates within quinol/quinone metabolism; 1,4-dihydroxy-2-naphthoate biosynthesis; 1,4-dihydroxy-2-naphthoate from chorismate: step 2/7. It participates in cofactor biosynthesis; phylloquinone biosynthesis. Catalyzes the thiamine diphosphate-dependent decarboxylation of 2-oxoglutarate and the subsequent addition of the resulting succinic semialdehyde-thiamine pyrophosphate anion to isochorismate to yield 2-succinyl-5-enolpyruvyl-6-hydroxy-3-cyclohexene-1-carboxylate (SEPHCHC). In Synechocystis sp. (strain ATCC 27184 / PCC 6803 / Kazusa), this protein is 2-succinyl-5-enolpyruvyl-6-hydroxy-3-cyclohexene-1-carboxylate synthase.